Consider the following 296-residue polypeptide: Cobalamin trafficking protein CblD (296 aa).

The N-terminal 38 residues, 1–38 (MAHVLCNRARLVSYLPGFCSLVKRVINPRAFSTAGSSG), are a transit peptide targeting the mitochondrion. Lys203 bears the N6-acetyllysine mark.

As to quaternary structure, heterodimer with MMACHC. Forms a multiprotein complex with MMACHC, MTR and MTRR.

The protein resides in the cytoplasm. It localises to the mitochondrion. Its function is as follows. Involved in cobalamin metabolism and trafficking. Plays a role in regulating the biosynthesis and the proportion of two coenzymes, methylcob(III)alamin (MeCbl) and 5'-deoxyadenosylcobalamin (AdoCbl). Promotes oxidation of cob(II)alamin bound to MMACHC. The processing of cobalamin in the cytosol occurs in a multiprotein complex composed of at least MMACHC, MMADHC, MTRR (methionine synthase reductase) and MTR (methionine synthase) which may contribute to shuttle safely and efficiently cobalamin towards MTR in order to produce methionine. This chain is Cobalamin trafficking protein CblD, found in Mus musculus (Mouse).